The following is a 323-amino-acid chain: ComG operon protein 2 (323 aa).

Helical transmembrane passes span 93-113 (YPLF…SIII), 143-163 (LVII…WLVF), and 296-316 (MIYG…LVPM).

This sequence belongs to the GSP F family.

It localises to the cell membrane. Functionally, required for transformation and DNA binding. In Bacillus subtilis (strain 168), this protein is ComG operon protein 2 (comGB).